We begin with the raw amino-acid sequence, 473 residues long: Adenosylhomocysteinase (473 aa).

Substrate is bound by residues T64, D139, and E199. Residue 200–202 (TTT) participates in NAD(+) binding. The substrate site is built by K229 and D233. Residues N234, 263–268 (GYGDVG), E286, N321, 342–344 (IGH), and N387 each bind NAD(+).

This sequence belongs to the adenosylhomocysteinase family. NAD(+) is required as a cofactor.

It localises to the cytoplasm. It catalyses the reaction S-adenosyl-L-homocysteine + H2O = L-homocysteine + adenosine. Its pathway is amino-acid biosynthesis; L-homocysteine biosynthesis; L-homocysteine from S-adenosyl-L-homocysteine: step 1/1. In terms of biological role, may play a key role in the regulation of the intracellular concentration of adenosylhomocysteine. In Burkholderia mallei (strain SAVP1), this protein is Adenosylhomocysteinase.